Reading from the N-terminus, the 394-residue chain is 1-deoxy-D-xylulose 5-phosphate reductoisomerase (394 aa).

The NADPH site is built by threonine 12, glycine 13, serine 14, isoleucine 15, lysine 39, glutamine 40, and asparagine 126. Lysine 127 is a 1-deoxy-D-xylulose 5-phosphate binding site. Glutamate 128 lines the NADPH pocket. Position 152 (aspartate 152) interacts with Mn(2+). 4 residues coordinate 1-deoxy-D-xylulose 5-phosphate: serine 153, glutamate 154, serine 183, and histidine 206. Residue glutamate 154 participates in Mn(2+) binding. NADPH is bound at residue glycine 212. Serine 219, asparagine 224, lysine 225, and glutamate 228 together coordinate 1-deoxy-D-xylulose 5-phosphate. Residue glutamate 228 participates in Mn(2+) binding.

Belongs to the DXR family. It depends on Mg(2+) as a cofactor. Requires Mn(2+) as cofactor.

The catalysed reaction is 2-C-methyl-D-erythritol 4-phosphate + NADP(+) = 1-deoxy-D-xylulose 5-phosphate + NADPH + H(+). It participates in isoprenoid biosynthesis; isopentenyl diphosphate biosynthesis via DXP pathway; isopentenyl diphosphate from 1-deoxy-D-xylulose 5-phosphate: step 1/6. Functionally, catalyzes the NADPH-dependent rearrangement and reduction of 1-deoxy-D-xylulose-5-phosphate (DXP) to 2-C-methyl-D-erythritol 4-phosphate (MEP). The polypeptide is 1-deoxy-D-xylulose 5-phosphate reductoisomerase (Neisseria meningitidis serogroup B (strain ATCC BAA-335 / MC58)).